A 118-amino-acid chain; its full sequence is MPRPPKCRWVRSEPNVTHFKPVGVPMSMLDEVILTVEELEAIRLKDLEGLEQEECAEMMKVSRPTFFRIINSARQKVADALVNGKAIRVEGGNYRVYDEDQRGHRGMRHRHGQWGRED.

It belongs to the UPF0251 family.

In Thermoanaerobacter pseudethanolicus (strain ATCC 33223 / 39E) (Clostridium thermohydrosulfuricum), this protein is UPF0251 protein Teth39_0655.